Reading from the N-terminus, the 126-residue chain is Arginine decarboxylase proenzyme (126 aa).

Serine 74 acts as the Schiff-base intermediate with substrate; via pyruvic acid in catalysis. Pyruvic acid (Ser); by autocatalysis is present on serine 74. The active-site Proton acceptor; for processing activity is the histidine 79. Cysteine 94 acts as the Proton donor; for catalytic activity in catalysis.

This sequence belongs to the prokaryotic AdoMetDC family. Type 1 subfamily. In terms of assembly, heterooctamer of four alpha and four beta chains arranged as a tetramer of alpha/beta heterodimers. Pyruvate serves as cofactor. In terms of processing, is synthesized initially as an inactive proenzyme. Formation of the active enzyme involves a self-maturation process in which the active site pyruvoyl group is generated from an internal serine residue via an autocatalytic post-translational modification. Two non-identical subunits are generated from the proenzyme in this reaction, and the pyruvate is formed at the N-terminus of the alpha chain, which is derived from the carboxyl end of the proenzyme. The post-translation cleavage follows an unusual pathway, termed non-hydrolytic serinolysis, in which the side chain hydroxyl group of the serine supplies its oxygen atom to form the C-terminus of the beta chain, while the remainder of the serine residue undergoes an oxidative deamination to produce ammonia and the pyruvoyl group blocking the N-terminus of the alpha chain.

The enzyme catalyses L-arginine + H(+) = agmatine + CO2. It functions in the pathway amine and polyamine biosynthesis; agmatine biosynthesis; agmatine from L-arginine: step 1/1. Functionally, specifically catalyzes the decarboxylation of L-arginine to agmatine. Has no S-adenosylmethionine decarboxylase (AdoMetDC) activity. This Pyrobaculum aerophilum (strain ATCC 51768 / DSM 7523 / JCM 9630 / CIP 104966 / NBRC 100827 / IM2) protein is Arginine decarboxylase proenzyme.